The chain runs to 191 residues: Insulin-like peptide INSL6 (191 aa).

The first 22 residues, 1-22 (MKQLCCSCLLWLGLLLTPFSRE), serve as a signal peptide directing secretion. 3 disulfide bridges follow: Cys-33–Cys-172, Cys-45–Cys-185, and Cys-171–Cys-176. A propeptide spans 53 to 161 (FEMEEQSPMT…RSLFWGNHSQ (109 aa)) (connecting peptide).

The protein belongs to the insulin family.

It is found in the secreted. May have a role in sperm development and fertilization. This Mus musculus (Mouse) protein is Insulin-like peptide INSL6 (Insl6).